The primary structure comprises 510 residues: Metalloprotease TIKI homolog (510 aa).

Residues 1-30 (MQVKIVQVFPCLVLLVKLVLLSVLLPSATG) form the signal peptide. Topologically, residues 31–489 (SYHCSNNATQ…FIPSASSGLR (459 aa)) are extracellular. Residues Asn-37, Asn-98, Asn-108, Asn-141, Asn-223, Asn-281, Asn-322, Asn-383, and Asn-417 are each glycosylated (N-linked (GlcNAc...) asparagine). The segment covering 435-471 (TSLNSATASTTVATPTSSVTPPTSSSSQTRSLTISDS) has biased composition (low complexity). A disordered region spans residues 435 to 477 (TSLNSATASTTVATPTSSVTPPTSSSSQTRSLTISDSQRTSDD). The chain crosses the membrane as a helical span at residues 490 to 510 (YNIGLVCVTLFFVLLIITSAL).

Belongs to the TIKI family. Mn(2+) is required as a cofactor. Requires Co(2+) as cofactor.

The protein resides in the membrane. Its function is as follows. Metalloprotease. This is Metalloprotease TIKI homolog from Amphimedon queenslandica (Sponge).